Reading from the N-terminus, the 1013-residue chain is Zinc finger and BTB domain-containing protein 4 (1013 aa).

Residues 30 to 152 (CDVTLIAGDT…IYSARLALPG (123 aa)) enclose the BTB domain. A Glycyl lysine isopeptide (Lys-Gly) (interchain with G-Cter in SUMO2) cross-link involves residue lysine 40. Positions 67–110 (LPPATGGAAPNPATTTAASSSSSSSSSSSSSSSSASSSSSSSSS) are enriched in low complexity. Disordered stretches follow at residues 67–124 (LPPA…SPPR) and 183–221 (DAWV…AEAQ). Residues 111 to 121 (SPPPASPPASS) show a composition bias toward pro residues. Residues 186–348 (VPPTPAPMAT…CRYCEKVFAL (163 aa)) are interaction with CBFA2T3. Residues 234–256 (LPCPQCGKSFIHPKRLQTHEAQC) form a C2H2-type 1; atypical zinc finger. Residues 257–281 (RRGASTRGSTGLGAGGAGPGGPAGV) form a disordered region. Residues 266-279 (TGLGAGGAGPGGPA) show a composition bias toward gly residues. C2H2-type zinc fingers lie at residues 309–331 (YVCA…SNVH), 337–359 (YPCR…EVWH), and 365–388 (YQCI…RAFH). Serine 391 carries the post-translational modification Phosphoserine. Disordered regions lie at residues 428 to 765 (KTYS…STRF), 783 to 852 (HGQR…DPII), 883 to 904 (GREP…AGEG), and 972 to 1013 (VNPQ…GDVG). The segment covering 453–470 (ASPPPGPPPAPEPGPPPS) has biased composition (pro residues). 2 stretches are compositionally biased toward low complexity: residues 496-506 (TASTGGSQAAS) and 531-554 (ATPT…ATTT). Residue lysine 573 forms a Glycyl lysine isopeptide (Lys-Gly) (interchain with G-Cter in SUMO2) linkage. Residues 576–590 (GGIGGGGGPPTGAGR) are compositionally biased toward gly residues. Residues 608-625 (IGEEAIVKRRISETDLRP) show a composition bias toward basic and acidic residues. Lysine 615 is covalently cross-linked (Glycyl lysine isopeptide (Lys-Gly) (interchain with G-Cter in SUMO2)). Residues 627–663 (ELSGEEMEESEEDEEEEDEEEEEEDEEESKAGGEDQL) are a coiled coil. Acidic residues predominate over residues 629-654 (SGEEMEESEEDEEEEDEEEEEEDEEE). The segment covering 678-689 (AAGGASVGGSGL) has biased composition (gly residues). C2H2-type zinc fingers lie at residues 726–748 (HRCG…QEAH) and 765–787 (FTCP…GQRH). Phosphothreonine; by HIPK2 is present on residues threonine 795 and threonine 797. Low complexity predominate over residues 836–846 (TAAEEASETAS). The segment covering 883-902 (GREPGGGRGKSGSEGPVGAG) has biased composition (gly residues). Pro residues predominate over residues 976–995 (AAPPAPPTPPPPTLPPPIPP). Threonine 983 is subject to Phosphothreonine; by HIPK2. Residues 997 to 1013 (GEGERAGVERTQKGDVG) are compositionally biased toward basic and acidic residues.

Interacts with HIPK2. Interacts with CBFA2T3. Interacts with ZBTB38. Post-translationally, phosphorylated by HIPK2. This phosphorylation reduces stability and triggers ZBTB4 protein degradation in response to DNA damage.

It is found in the nucleus. Its subcellular location is the chromosome. Its function is as follows. Transcriptional repressor with bimodal DNA-binding specificity. Represses transcription in a methyl-CpG-dependent manner. Binds with a higher affinity to methylated CpG dinucleotides in the consensus sequence 5'-CGCG-3' but can also bind to the non-methylated consensus sequence 5'-CTGCNA-3' also known as the consensus kaiso binding site (KBS). Can also bind specifically to a single methyl-CpG pair and can bind hemimethylated DNA but with a lower affinity compared to methylated DNA. Plays a role in postnatal myogenesis, may be involved in the regulation of satellite cells self-renewal. In Homo sapiens (Human), this protein is Zinc finger and BTB domain-containing protein 4 (ZBTB4).